The chain runs to 101 residues: DET1- and DDB1-associated protein 1 (101 aa).

Residues 67-101 (NAAKKRDQDQLEIGETSAPPRKIARTDSQEMSEDT) form a disordered region.

This sequence belongs to the DDA1 family. As to quaternary structure, component of numerous DCX (DDB1-CUL4-X-box) E3 ubiquitin-protein ligase complexes which consist of a core of DDB1, cullin-4 (CUL4A or CUL4B), DDA1 and RBX1.

It functions in the pathway protein modification; protein ubiquitination. Functions as a component of numerous distinct DCX (DDB1-CUL4-X-box) E3 ubiquitin-protein ligase complexes which mediate the ubiquitination and subsequent proteasomal degradation of target proteins. In the DCX complexes, acts as a scaffolding subunit required to stabilize the complex. This Xenopus tropicalis (Western clawed frog) protein is DET1- and DDB1-associated protein 1.